The primary structure comprises 99 residues: UPF0122 protein UU142 (99 aa).

The protein belongs to the UPF0122 family.

Its function is as follows. Might take part in the signal recognition particle (SRP) pathway. This is inferred from the conservation of its genetic proximity to ftsY/ffh. May be a regulatory protein. The protein is UPF0122 protein UU142 of Ureaplasma parvum serovar 3 (strain ATCC 700970).